The primary structure comprises 912 residues: Probable dipeptidyl-aminopeptidase B (912 aa).

A disordered region spans residues 1–74 (MSSALSPEGD…GPFLGPGASL (74 aa)). Topologically, residues 1-85 (MSSALSPEGD…REPMDRGLRR (85 aa)) are cytoplasmic. Residues 16 to 27 (DSLSSVSTTSLV) are compositionally biased toward low complexity. A compositionally biased stretch (basic and acidic residues) spans 30 to 50 (RIQEKTEMDADNDKEKDPRAL). A compositionally biased stretch (acidic residues) spans 51 to 63 (DDEDPLRDEDDLE). Residues 86-106 (ILIIVAVVFIGGWLAGLGIFI) form a helical; Signal-anchor for type II membrane protein membrane-spanning segment. Residues 107 to 912 (ASGSYHHESD…KRHMVPQALV (806 aa)) lie on the Vacuolar side of the membrane. Asn344 carries an N-linked (GlcNAc...) asparagine glycan. Catalysis depends on Ser749, which acts as the Charge relay system. Asn808 is a glycosylation site (N-linked (GlcNAc...) asparagine). Residues Asp826 and His859 each act as charge relay system in the active site. Positions 892 to 912 (PQPQKDPVEKEKRHMVPQALV) are disordered.

The protein belongs to the peptidase S9B family.

The protein resides in the vacuole membrane. It carries out the reaction Release of an N-terminal dipeptide, Xaa-Yaa-|-Zaa-, from a polypeptide, preferentially when Yaa is Pro, provided Zaa is neither Pro nor hydroxyproline.. In terms of biological role, type IV dipeptidyl-peptidase which removes N-terminal dipeptides sequentially from polypeptides having unsubstituted N-termini provided that the penultimate residue is proline. The sequence is that of Probable dipeptidyl-aminopeptidase B (DAPB) from Fusarium vanettenii (strain ATCC MYA-4622 / CBS 123669 / FGSC 9596 / NRRL 45880 / 77-13-4) (Fusarium solani subsp. pisi).